The following is a 172-amino-acid chain: Small integral membrane protein 23 (172 aa).

Residues 1–36 (MATQQVDSRRQVAAEQVAAQLLERRRGSHCDDEKQT) lie on the Cytoplasmic side of the membrane. Residues 37–53 (LLALLILVLYLSTEIWG) form a helical; Signal-anchor for type II membrane protein membrane-spanning segment. At 54 to 172 (SSWEVSERIR…LEISLSGAEL (119 aa)) the chain is on the extracellular side. Positions 96–128 (LKEKLHVFSEKLEEEVQQLEQLAWDLELWLDAL) form a coiled coil.

It is found in the cell membrane. This Homo sapiens (Human) protein is Small integral membrane protein 23 (SMIM23).